The primary structure comprises 435 residues: Glutamyl-tRNA reductase (435 aa).

Substrate contacts are provided by residues 49-52, Ser109, 114-116, and Gln120; these read TCNR and ETQ. Cys50 functions as the Nucleophile in the catalytic mechanism. 189–194 is a binding site for NADP(+); the sequence is GAGEMS.

The protein belongs to the glutamyl-tRNA reductase family. As to quaternary structure, homodimer.

The enzyme catalyses (S)-4-amino-5-oxopentanoate + tRNA(Glu) + NADP(+) = L-glutamyl-tRNA(Glu) + NADPH + H(+). It functions in the pathway porphyrin-containing compound metabolism; protoporphyrin-IX biosynthesis; 5-aminolevulinate from L-glutamyl-tRNA(Glu): step 1/2. Functionally, catalyzes the NADPH-dependent reduction of glutamyl-tRNA(Glu) to glutamate 1-semialdehyde (GSA). This Listeria monocytogenes serotype 4a (strain HCC23) protein is Glutamyl-tRNA reductase.